The sequence spans 145 residues: 3-dehydroquinate dehydratase 2 (145 aa).

Residue Y22 is the Proton acceptor of the active site. Residues N73, H79, and D86 each coordinate substrate. Catalysis depends on H101, which acts as the Proton donor. Substrate is bound by residues 102–103 and R112; that span reads IS.

The protein belongs to the type-II 3-dehydroquinase family. Homododecamer.

It catalyses the reaction 3-dehydroquinate = 3-dehydroshikimate + H2O. The protein operates within metabolic intermediate biosynthesis; chorismate biosynthesis; chorismate from D-erythrose 4-phosphate and phosphoenolpyruvate: step 3/7. Catalyzes a trans-dehydration via an enolate intermediate. The sequence is that of 3-dehydroquinate dehydratase 2 (aroQ2) from Corynebacterium efficiens (strain DSM 44549 / YS-314 / AJ 12310 / JCM 11189 / NBRC 100395).